The sequence spans 234 residues: Interleukin-34 (234 aa).

An N-terminal signal peptide occupies residues 1-20 (MPWGLAWLYCLGILLDVALG). Asn99 carries N-linked (GlcNAc...) asparagine glycosylation. The disordered stretch occupies residues 215 to 234 (PRQPPTSLPRSPSSNHGPLP). Over residues 222-234 (LPRSPSSNHGPLP) the composition is skewed to polar residues.

Belongs to the IL-34 family. In terms of assembly, homodimer. Interacts with CSF1R.

It is found in the secreted. In terms of biological role, cytokine that promotes the proliferation, survival and differentiation of monocytes and macrophages. Promotes the release of pro-inflammatory chemokines, and thereby plays an important role in innate immunity and in inflammatory processes. Plays an important role in the regulation of osteoclast proliferation and differentiation, and in the regulation of bone resorption. Signaling via CSF1R and its downstream effectors stimulates phosphorylation of MAPK1/ERK2 AND MAPK3/ERK1. This is Interleukin-34 (Il34) from Rattus norvegicus (Rat).